We begin with the raw amino-acid sequence, 156 residues long: Small ribosomal subunit protein uS7 (156 aa).

Belongs to the universal ribosomal protein uS7 family. In terms of assembly, part of the 30S ribosomal subunit. Contacts proteins S9 and S11.

Functionally, one of the primary rRNA binding proteins, it binds directly to 16S rRNA where it nucleates assembly of the head domain of the 30S subunit. Is located at the subunit interface close to the decoding center, probably blocks exit of the E-site tRNA. The chain is Small ribosomal subunit protein uS7 from Micrococcus luteus (strain ATCC 4698 / DSM 20030 / JCM 1464 / CCM 169 / CCUG 5858 / IAM 1056 / NBRC 3333 / NCIMB 9278 / NCTC 2665 / VKM Ac-2230) (Micrococcus lysodeikticus).